The following is a 156-amino-acid chain: Cyanate hydratase (156 aa).

Residues Arg96, Glu99, and Ser122 contribute to the active site.

The protein belongs to the cyanase family.

It carries out the reaction cyanate + hydrogencarbonate + 3 H(+) = NH4(+) + 2 CO2. Its function is as follows. Catalyzes the reaction of cyanate with bicarbonate to produce ammonia and carbon dioxide. The chain is Cyanate hydratase from Escherichia coli (strain ATCC 8739 / DSM 1576 / NBRC 3972 / NCIMB 8545 / WDCM 00012 / Crooks).